We begin with the raw amino-acid sequence, 170 residues long: MQIQVGSQNPTKIQAVKEMFPNIDVIGVQAESGVSAQPFSDEETKLGAITRAKYCAMNNPYTIGVGLEGGVMYIDNELYLCNWGALVTPENDIITASGARIKIPNDVEEGLLKNIELGELMDTYAEKKDVSKKEGAIGIFTNQLITRKEMFRHVVTLLKGQWMLLNSNNH.

Glu31 contacts Mg(2+).

This sequence belongs to the YjjX NTPase family. As to quaternary structure, homodimer. Mg(2+) serves as cofactor. Requires Mn(2+) as cofactor.

It carries out the reaction XTP + H2O = XDP + phosphate + H(+). The enzyme catalyses ITP + H2O = IDP + phosphate + H(+). In terms of biological role, phosphatase that hydrolyzes non-canonical purine nucleotides such as XTP and ITP to their respective diphosphate derivatives. Probably excludes non-canonical purines from DNA/RNA precursor pool, thus preventing their incorporation into DNA/RNA and avoiding chromosomal lesions. The polypeptide is Probable inosine/xanthosine triphosphatase (Oceanobacillus iheyensis (strain DSM 14371 / CIP 107618 / JCM 11309 / KCTC 3954 / HTE831)).